The primary structure comprises 333 residues: Transcription factor MYB36 (333 aa).

HTH myb-type domains lie at 9–62 and 63–117; these read KANV…LNYL and RPNI…KKKL. 2 consecutive DNA-binding regions (H-T-H motif) follow at residues 38–62 and 90–113; these read WIAL…LNYL and WSII…NTKL. A disordered region spans residues 119 to 150; that stretch reads GRQKQMNRQDSITDSTENNLSNNNNNKSPQNL. Residues 122-135 are compositionally biased toward polar residues; the sequence is KQMNRQDSITDSTE. Residues 136–150 are compositionally biased toward low complexity; sequence NNLSNNNNNKSPQNL.

Expressed in leaves, roots (endodermis-specific) and seedlings.

It localises to the nucleus. Transcription factors that activates genes required for endodermal differentiation but represses genes involved in proliferative divisions, thus regulating the transition from proliferation to differentiation in root endodermis. Required for Casparian strip formation by positively regulating the expression of the Casparian strip genes CASP1, PER64 and ESB1 and other endodermis-specific genes, thus triggering correct localized lignin biosynthesis in root endodermis and subsequently regulating global ion homeostasis. The polypeptide is Transcription factor MYB36 (Arabidopsis thaliana (Mouse-ear cress)).